Consider the following 1058-residue polypeptide: Ubiquitin-like modifier-activating enzyme 1 Y (1058 aa).

Positions 1 to 22 (MSSSVLSKKRKVSGPDSSLDSS) are disordered. ATP contacts are provided by residues alanine 477, aspartate 503, arginine 514, lysine 527, and 575 to 576 (DN). Cysteine 631 serves as the catalytic Glycyl thioester intermediate.

This sequence belongs to the ubiquitin-activating E1 family. In terms of assembly, monomer. In terms of tissue distribution, expressed in testis in A spermatogonia and spermatids but not (or at very low levels) in pachytene spermatocytes. Also expressed in Y-bearing ovaries and at very low levels in adrenal gland.

It catalyses the reaction ATP + ubiquitin + [E1 ubiquitin-activating enzyme]-L-cysteine = AMP + diphosphate + S-ubiquitinyl-[E1 ubiquitin-activating enzyme]-L-cysteine.. It participates in protein modification; protein ubiquitination. Its function is as follows. Activates ubiquitin by first adenylating its C-terminal glycine residue with ATP, and thereafter linking this residue to the side chain of a cysteine residue in E1, yielding a ubiquitin-E1 thioester and free AMP. The Y chromosome form could be involved in the survival and proliferation of differentiating spermatogonia. This Mus musculus (Mouse) protein is Ubiquitin-like modifier-activating enzyme 1 Y (Uba1y).